The primary structure comprises 631 residues: Phosphomethylpyrimidine synthase (631 aa).

Substrate is bound by residues N239, M268, Y297, H333, S353–G355, D394–R397, and E433. Position 437 (H437) interacts with Zn(2+). Substrate is bound at residue Y460. Residue H501 participates in Zn(2+) binding. Positions 581, 584, and 589 each coordinate [4Fe-4S] cluster.

It belongs to the ThiC family. As to quaternary structure, homodimer. The cofactor is [4Fe-4S] cluster.

It carries out the reaction 5-amino-1-(5-phospho-beta-D-ribosyl)imidazole + S-adenosyl-L-methionine = 4-amino-2-methyl-5-(phosphooxymethyl)pyrimidine + CO + 5'-deoxyadenosine + formate + L-methionine + 3 H(+). The protein operates within cofactor biosynthesis; thiamine diphosphate biosynthesis. Catalyzes the synthesis of the hydroxymethylpyrimidine phosphate (HMP-P) moiety of thiamine from aminoimidazole ribotide (AIR) in a radical S-adenosyl-L-methionine (SAM)-dependent reaction. This chain is Phosphomethylpyrimidine synthase, found in Salmonella arizonae (strain ATCC BAA-731 / CDC346-86 / RSK2980).